A 194-amino-acid chain; its full sequence is Clathrin light chain (194 aa).

The interval 44–156 (TTFDNSNNNN…TDSTSGNTTH (113 aa)) is disordered. Residues 48–65 (NSNNNNNNNNHNNNSYNS) are compositionally biased toward low complexity. Basic and acidic residues-rich tracts occupy residues 89-115 (EYLE…KIAE) and 124-146 (YSER…KSLE). Positions 124–194 (YSEREAKKKT…LIRLKNQPIV (71 aa)) are required for binding clathrin heavy chain, localization to punctae, and for cytokinesis and fruiting body development. Polar residues predominate over residues 147 to 156 (TDSTSGNTTH).

The protein belongs to the clathrin light chain family. As to quaternary structure, clathrin coats are formed from molecules containing 3 heavy chains and 3 light chains.

The protein localises to the cytoplasmic vesicle membrane. The protein resides in the membrane. It is found in the coated pit. Clathrin is the major protein of the polyhedral coat of coated pits and vesicles. The sequence is that of Clathrin light chain (clc) from Dictyostelium discoideum (Social amoeba).